A 231-amino-acid polypeptide reads, in one-letter code: Cysteine-rich venom protein VAR10 (231 aa).

A signal peptide spans 1-19 (MILLKLYLTLAAILCQSRG). In terms of domain architecture, SCP spans 41 to 169 (NKHNDLRRTV…SLKYFQVCQY (129 aa)). Disulfide bonds link C77-C156, C95-C170, C151-C167, C189-C196, and C214-C231. In terms of domain architecture, ShKT spans 205–231 (CAYNDDYTSCPDLTKQVGCHHPVTANC).

It belongs to the CRISP family. In terms of processing, contains 8 disulfide bonds. Expressed by the venom gland.

It localises to the secreted. In terms of biological role, blocks ryanodine receptors, and potassium channels. This is Cysteine-rich venom protein VAR10 from Varanus varius (Lace monitor lizard).